The chain runs to 508 residues: Lysine--tRNA ligase (508 aa).

Residues Glu-416 and Glu-423 each contribute to the Mg(2+) site.

It belongs to the class-II aminoacyl-tRNA synthetase family. Homodimer. The cofactor is Mg(2+).

The protein localises to the cytoplasm. It carries out the reaction tRNA(Lys) + L-lysine + ATP = L-lysyl-tRNA(Lys) + AMP + diphosphate. The polypeptide is Lysine--tRNA ligase (Prochlorococcus marinus (strain MIT 9303)).